A 486-amino-acid chain; its full sequence is Glucose-6-phosphate 1-dehydrogenase (486 aa).

NADP(+) contacts are provided by residues 13–20 (GGTGDLAK), R47, 86–87 (DV), and K149. Substrate-binding residues include H179, K183, E217, and D236. H241 acts as the Proton acceptor in catalysis. Substrate-binding residues include K339 and K344.

The protein belongs to the glucose-6-phosphate dehydrogenase family. As to quaternary structure, homodimer.

It catalyses the reaction D-glucose 6-phosphate + NAD(+) = 6-phospho-D-glucono-1,5-lactone + NADH + H(+). The enzyme catalyses D-glucose 6-phosphate + NADP(+) = 6-phospho-D-glucono-1,5-lactone + NADPH + H(+). The protein operates within carbohydrate degradation; pentose phosphate pathway; D-ribulose 5-phosphate from D-glucose 6-phosphate (oxidative stage): step 1/3. Functionally, catalyzes the oxidation of glucose 6-phosphate to 6-phosphogluconolactone. Can utilize either NADP(+) or NAD(+). This Leuconostoc mesenteroides protein is Glucose-6-phosphate 1-dehydrogenase.